The following is a 550-amino-acid chain: Methionine--tRNA ligase (550 aa).

Positions 13–23 (PYANGPLHFGH) match the 'HIGH' region motif. 4 residues coordinate Zn(2+): Cys145, Cys148, Cys158, and Cys161. A 'KMSKS' region motif is present at residues 331-335 (QFSKS). ATP is bound at residue Lys334.

It belongs to the class-I aminoacyl-tRNA synthetase family. MetG type 1 subfamily. In terms of assembly, monomer. The cofactor is Zn(2+).

The protein resides in the cytoplasm. The catalysed reaction is tRNA(Met) + L-methionine + ATP = L-methionyl-tRNA(Met) + AMP + diphosphate. Its function is as follows. Is required not only for elongation of protein synthesis but also for the initiation of all mRNA translation through initiator tRNA(fMet) aminoacylation. This chain is Methionine--tRNA ligase (metG), found in Chlamydia muridarum (strain MoPn / Nigg).